The following is a 365-amino-acid chain: BTB/POZ and TAZ domain-containing protein 1 (365 aa).

The region spanning 25 to 96 (TDVEIITSGR…LYSPSVTENE (72 aa)) is the BTB domain. Positions 193-202 (RKKRRRRHRR) match the Nuclear localization signal motif. The TAZ-type zinc finger occupies 205–304 (NLYLQLSEAM…SESCRVPLCR (100 aa)). The caM-binding stretch occupies residues 315-338 (KMVEDTKWKVLVRRVASAKAMSSL).

Interacts with CUL3A. Interacts with GTE9/BET9 and GTE11/BET10 through the BTB domain. In terms of tissue distribution, preferentially expressed in young leaves, roots and stems.

It localises to the nucleus. It is found in the cytoplasm. The protein operates within protein modification; protein ubiquitination. May act as a substrate-specific adapter of an E3 ubiquitin-protein ligase complex (CUL3-RBX1-BTB) which mediates the ubiquitination and subsequent proteasomal degradation of target proteins. Also targeted for degradation by the 26S proteasome pathway. May be involved in gametophyte development. The protein is BTB/POZ and TAZ domain-containing protein 1 (BT1) of Arabidopsis thaliana (Mouse-ear cress).